A 149-amino-acid chain; its full sequence is 18 kDa antigen 1 (149 aa).

One can recognise a sHSP domain in the interval 21-131; the sequence is TAARPAVMPM…KPRKIAVGRG (111 aa).

This sequence belongs to the small heat shock protein (HSP20) family.

In terms of biological role, not known. This protein is one of the major immune reactive proteins in mycobacteria. The protein is 18 kDa antigen 1 of Mycobacterium intracellulare.